A 1784-amino-acid chain; its full sequence is MDNENSSIFKSYQGYECWRGEKQIILKDSIGRQLPYIVNFKKNTCQIFDIEWERVTHSFVFPEGCALIDADYFPTEEGKLGILVGVEDPRQSCGAEHFVLALAVDPDSPAMTITHSLEVPSKITVVKTLFSSADMADETQRTVLKLYHRLMTWQHIVAIGCKETQCYLARLVAVETPSSPVITVHSEKKYLINLMNAYVSGSVLQYTLDDGAYREYPTAAVYISALSLMPRSRTLLVGLSMGGILAASLNPSNQMMLLELRHERLVRKIAPLEPEDDPDKFEYFIATVDCSPRHPIMIQLWRGSFKTLEDVDGEEKYDRPSFSVCLEHKILFGERWLAVNPIVTERDHMMLTRKRGTEDSMHNVSQTFGSTSNRNSVLLAYERKKMVIGTEDPNAEPEYIVEAAIFDIDSWYYKRVPGRVSTDGTVLKQCAFLSTIKSNIRSEDVNDIGILTNEATDVSSFSSMVSDADQLFYPSALSFERVFVAKNTRIDWMKIQNIQDTILNKCAVKLPALIRNPEMISSVVMAAGLVRKNILSGSPNSSAAEINELQLSSDQKVLLNVIVYYGKIEEFCQLASRPDISDTLKRELAEWALHEAVDYKRTISDKMVSLFQGRSLALSPLAEESIAQGIKLFRVVYEYLKACSKALKDDRLRNLAHSVICMRNHTKLTSQFINFAIIPVDPIRQQRMKDLHSKRKNMARKNSSSLPVQSVVRKMNRQAPNAQFWNDIPHDEWYPPTPLDLLECLLNVSISESIKRELVVQYVIDWISTSPEDSEHSEKQLALETIKIMTNQMLNVNLEKIYYILDQGKKALTSSKTSDDMRALGEKVFSMKDDEISYEKLWGKDAPMTVTIGKHDLQRFEQRMKMQMEGGKVRLPVLDPESEILYQMFLFENEKFEAMSSEAISSNKLLSAFLPGMIKKDGRGRQKTAKEQEIEISVKKMFERKVQNDDEDMPEVFASVNDKTERKRKSSQFGEDDESSVSSSQYVPPTAKRIQQWKSAVESVANNSSINSITSPDSHQNAEINMMIATPARYYKRHNEEENVQDGFLSPAGNRPPPVSAHNSILKTAKGGQSASRGRIRFRADVPRGADESIEDNGRKGLALNFAILEDEEEETMTIRKSRSMGKHDEEKDSEKNVVDEMEEVKDQEQENDECIESEKTFENQDDFEVLEDTSAPEAANTENGSETPPMEDTFEVRDDDVMPPTDETYLSHLQTDKTGILEEEGEDEDIWDGVQRSFEVQMDEDCEAVPTIDVADDLESKSEEVNEEEVVESEEVQQDAKEPEKTEKRQEEPEPEVMQPVIPEEPQNESLESSIKLQEELQEEPDIVPTGDEDTADKVQEQAVEEDRPPSRNTRSSSVQKSTSQVEDRDPKELVEEERPPSRNTRSASVQKSSNQEKTSESGEVTEEDRPPSRNTRSASVQKSSSKVKDQKPEELIEEDRPPSRNTRSASAQKTVAANKSVLESEIPSRSASRRTRSTSLRNDTVAEPDETSVAMTTRRRTRATSEVVSKQSSEDDGRSTPKTGRTPTKKAAASTSSSRAGSVTRGKKSIIQKMPSPLEVTMEVQEEEEEEAEEERPASRSTRSASVKNTTVDPSSSALASTKRTTSRKRGNSETIDFNQDDKSAPTTPKRGRPAKKDAGSPKVGSKARGTKPKSIFENQEDEEDRSSSPDIEQPATPTRSSKRTARSRANSESIDDDSKQKTPKKKNAAVNEAGTSKQSRSVTRSRASSIDVQQEVEEPTTPKRGRGRPPKTVLENIEEGEEERKETAATPLLRSARRAKQ.

Residues 1-956 are required for nuclear envelope and kinetochore localization; that stretch reads MDNENSSIFK…QNDDEDMPEV (956 aa). A required for association with mitotic chromosomes region spans residues 566 to 778; it reads GKIEEFCQLA…TSPEDSEHSE (213 aa). Residues 846-1071 form an important for nuclear localization region; that stretch reads APMTVTIGKH…HNSILKTAKG (226 aa). Disordered stretches follow at residues 945–994 and 1115–1784; these read KVQN…AKRI and ETMT…RAKQ. Over residues 1126 to 1149 the composition is skewed to basic and acidic residues; it reads GKHDEEKDSEKNVVDEMEEVKDQE. Composition is skewed to acidic residues over residues 1222 to 1232 and 1266 to 1278; these read LEEEGEDEDIW and VNEE…EEVQ. The segment at 1239–1601 is chromatin binding; the sequence is FEVQMDEDCE…TTVDPSSSAL (363 aa). Positions 1279-1293 are enriched in basic and acidic residues; that stretch reads QDAKEPEKTEKRQEE. Low complexity predominate over residues 1297–1306; sequence EVMQPVIPEE. Residues 1321-1336 show a composition bias toward acidic residues; it reads ELQEEPDIVPTGDEDT. The segment covering 1337–1351 has biased composition (basic and acidic residues); the sequence is ADKVQEQAVEEDRPP. The segment covering 1352–1366 has biased composition (polar residues); it reads SRNTRSSSVQKSTSQ. Positions 1367-1382 are enriched in basic and acidic residues; that stretch reads VEDRDPKELVEEERPP. A compositionally biased stretch (polar residues) spans 1383-1398; it reads SRNTRSASVQKSSNQE. Basic and acidic residues predominate over residues 1428 to 1444; that stretch reads KVKDQKPEELIEEDRPP. Polar residues predominate over residues 1445 to 1459; it reads SRNTRSASAQKTVAA. Low complexity predominate over residues 1533-1546; sequence AAASTSSSRAGSVT. The segment covering 1566 to 1576 has biased composition (acidic residues); that stretch reads VQEEEEEEAEE. A compositionally biased stretch (polar residues) spans 1581-1606; it reads SRSTRSASVKNTTVDPSSSALASTKR. The tract at residues 1601–1784 is important for nuclear localization; the sequence is LASTKRTTSR…LLRSARRAKQ (184 aa). The a.T hook 1 DNA-binding region spans 1630-1642; it reads TPKRGRPAKKDAG. Residues 1630-1784 are required for chromosome segregation, nuclear growth, nucleoplasmic accumulation and cell cycle timing, but not required for nuclear envelope and kinetochore localization; it reads TPKRGRPAKK…LLRSARRAKQ (155 aa). Over residues 1716-1735 the composition is skewed to polar residues; sequence AGTSKQSRSVTRSRASSIDV. Positions 1746–1758 form a DNA-binding region, a.T hook 2; sequence KRGRGRPPKTVLE.

In terms of tissue distribution, ubiquitously expressed (at protein level).

It localises to the nucleus. The protein resides in the nucleoplasm. The protein localises to the nucleus envelope. Its subcellular location is the nucleus inner membrane. It is found in the nuclear pore complex. It localises to the chromosome. The protein resides in the centromere. The protein localises to the kinetochore. Nuclear envelope protein which has essential roles in assembly of nuclear pore complexes and in chromatin maintenance during the cell cycle. Appears to be a stable structural component of the nuclear envelope during interphase. In dividing cells, localizes to kinetochores during early stages of mitosis and then to chromatin during late mitosis. Important for several mitotic processes including chromosome condensation, kinetochore assembly, chromosome segregation and cell-cycle timing. In postmitotic cells, plays a role in the early steps of nuclear pore complex assembly by recruiting the nucleoporins npp-10 and npp-5 to chromatin. Also involved in meiotic chromosome segregation. May function downstream of the Ran GTPase signaling pathway. The chain is Protein mel-28 from Caenorhabditis elegans.